The chain runs to 183 residues: NEDD8-conjugating enzyme Ubc12 (183 aa).

N-acetylmethionine is present on methionine 1. The disordered stretch occupies residues 1-28; that stretch reads MIKLFSLKQQKKEEESAGGTKGSSKKAS. The UBC core domain maps to 29–173; it reads AAQLRIQKDI…VQRSMRGGYI (145 aa). Cysteine 111 acts as the Glycyl thioester intermediate in catalysis.

Belongs to the ubiquitin-conjugating enzyme family. UBC12 subfamily. The acetylation of Met-1 increases affinity for DCUN1D1 by about 2 orders of magnitude and is crucial for NEDD8 transfer to cullins.

The catalysed reaction is [E1 NEDD8-activating enzyme]-S-[NEDD8 protein]-yl-L-cysteine + [E2 NEDD8-conjugating enzyme]-L-cysteine = [E1 NEDD8-activating enzyme]-L-cysteine + [E2 NEDD8-conjugating enzyme]-S-[NEDD8-protein]-yl-L-cysteine.. Its pathway is protein modification; protein neddylation. Accepts the ubiquitin-like protein NEDD8 from the UBA3-NAE1 E1 complex and catalyzes its covalent attachment to other proteins. The specific interaction with the E3 ubiquitin ligase rbx1, but not rbx2, suggests that the rbx1-ube2m complex neddylates specific target proteins, such as cul1, cul2, cul3 and cul4. Involved in cell proliferation. The polypeptide is NEDD8-conjugating enzyme Ubc12 (ube2m) (Xenopus laevis (African clawed frog)).